The chain runs to 146 residues: Large ribosomal subunit protein uL15 (146 aa).

Residues 1–54 (MKLHELKPAAGSRKAPKRVGRGTGSGLGRNAGKGEKGQNARSGGGVRPGFEGGQ) form a disordered region. 2 stretches are compositionally biased toward gly residues: residues 21–31 (RGTGSGLGRNA) and 42–52 (SGGGVRPGFEG).

It belongs to the universal ribosomal protein uL15 family. Part of the 50S ribosomal subunit.

Binds to the 23S rRNA. This Clostridium acetobutylicum (strain ATCC 824 / DSM 792 / JCM 1419 / IAM 19013 / LMG 5710 / NBRC 13948 / NRRL B-527 / VKM B-1787 / 2291 / W) protein is Large ribosomal subunit protein uL15.